Reading from the N-terminus, the 243-residue chain is Small ribosomal subunit protein uS3 (243 aa).

Residues 39 to 110 (IRGFIQKKYA…QVRINVVEIE (72 aa)) enclose the KH type-2 domain. A disordered region spans residues 215 to 243 (DQPLPVGASPRRKGSRRPQQFEDRSNDGK). Over residues 233-243 (QQFEDRSNDGK) the composition is skewed to basic and acidic residues.

This sequence belongs to the universal ribosomal protein uS3 family. As to quaternary structure, part of the 30S ribosomal subunit. Forms a tight complex with proteins S10 and S14.

Binds the lower part of the 30S subunit head. Binds mRNA in the 70S ribosome, positioning it for translation. This Prochlorococcus marinus (strain MIT 9211) protein is Small ribosomal subunit protein uS3.